The chain runs to 396 residues: Elongation factor Tu (396 aa).

The tr-type G domain occupies 10–206 (KPHVNIGTIG…AVDESVPDPV (197 aa)). A G1 region spans residues 19 to 26 (GHVDHGKT). Residue 19–26 (GHVDHGKT) participates in GTP binding. Mg(2+) is bound at residue threonine 26. Residues 62–66 (GITIN) form a G2 region. The segment at 83–86 (DAPG) is G3. GTP contacts are provided by residues 83–87 (DAPGH) and 138–141 (NKSD). Residues 138–141 (NKSD) are G4. Residues 176 to 178 (SGL) form a G5 region.

Belongs to the TRAFAC class translation factor GTPase superfamily. Classic translation factor GTPase family. EF-Tu/EF-1A subfamily. As to quaternary structure, monomer.

It localises to the cytoplasm. It catalyses the reaction GTP + H2O = GDP + phosphate + H(+). Functionally, GTP hydrolase that promotes the GTP-dependent binding of aminoacyl-tRNA to the A-site of ribosomes during protein biosynthesis. The polypeptide is Elongation factor Tu (Pseudarthrobacter chlorophenolicus (strain ATCC 700700 / DSM 12829 / CIP 107037 / JCM 12360 / KCTC 9906 / NCIMB 13794 / A6) (Arthrobacter chlorophenolicus)).